The chain runs to 347 residues: MAKLLLLIFGVFIFVNSQAQTFPTILEKHNSEKITDVFHKGNFQVTNNPIRVKRYEFSAPEPLIIISPKEAGVYPVLLFIHGTMLSNEDYSLFFNYIASHGFIVVAPKLFRLFPPKLPSQQDEIDMAASVANWMPLYLQVVLQRYVTGVEGDLEKLAISGHSRGGKSAFALALGFSNIKLDVTFSALIGVDPVAGRSVDDRTLPHVLTYKPNSFNLSIPVTVIGSGLGNHTISCAPNHVSHQQFYDECKENSSHFVITKYGHMDMLNEFRLSPIAVTMSLMCAQSFRPKATMRRTLGGIMVAFLNAYFRDDGRQYYAIIANRSLAPTNLFAEKKGFNFGFATTYAQL.

The first 19 residues, 1-19 (MAKLLLLIFGVFIFVNSQA), serve as a signal peptide directing secretion. A propeptide spanning residues 20-30 (QTFPTILEKHN) is cleaved from the precursor. The short motif at 160-164 (GHSRG) is the GXSXG element. Residue S162 is the Nucleophile of the active site. D191 acts as the Charge relay system in catalysis. Residues N215, N229, and N251 are each glycosylated (N-linked (GlcNAc...) asparagine). H262 acts as the Charge relay system in catalysis. An N-linked (GlcNAc...) asparagine glycan is attached at N321.

Belongs to the AB hydrolase superfamily. Lipase family.

It carries out the reaction a chlorophyll + H2O = a chlorophyllide + phytol + H(+). The catalysed reaction is chlorophyll a + H2O = phytol + chlorophyllide a + H(+). Its pathway is porphyrin-containing compound metabolism; chlorophyll degradation. Its activity is regulated as follows. Inhibited by diisopropyl fluorophosphate (DFP), phenylmethanesulfonyl fluoride (PMSF) or p-chloromercuribenzoic acid (PCMB), but not by N-ethylmaleimide (NEM) or iodoacetamide. In terms of biological role, catalyzes the hydrolysis of ester bond in chlorophyll to yield chlorophyllide and phytol. This is Chlorophyllase type 0 from Chenopodium album (Fat hen).